A 614-amino-acid polypeptide reads, in one-letter code: uncharacterized protein (614 aa).

Helical transmembrane passes span 41 to 61 (GWIF…AVLF), 87 to 107 (LIGM…ASAV), 157 to 177 (DTVL…ITSG), and 178 to 198 (VVLV…IILF). Residues 43–330 (IFLLAILTVG…IMWESARLFE (288 aa)) enclose the ABC transmembrane type-1 domain. The ABC transporter domain maps to 364–603 (IKFNDITFAY…NGLYAKLWNH (240 aa)). Residue 397 to 404 (GRSGAGKS) coordinates ATP.

Belongs to the ABC transporter superfamily.

The protein resides in the cell membrane. This is an uncharacterized protein from Haemophilus influenzae (strain ATCC 51907 / DSM 11121 / KW20 / Rd).